A 404-amino-acid chain; its full sequence is Cysteine desulfurase IscS (404 aa).

Pyridoxal 5'-phosphate contacts are provided by residues 75–76 (AT), asparagine 155, glutamine 183, and 203–205 (SSH). The residue at position 206 (lysine 206) is an N6-(pyridoxal phosphate)lysine. Threonine 243 is a pyridoxal 5'-phosphate binding site. The Cysteine persulfide intermediate role is filled by cysteine 328. Cysteine 328 is a binding site for [2Fe-2S] cluster.

It belongs to the class-V pyridoxal-phosphate-dependent aminotransferase family. NifS/IscS subfamily. As to quaternary structure, homodimer. Forms a heterotetramer with IscU, interacts with other sulfur acceptors. Requires pyridoxal 5'-phosphate as cofactor.

It localises to the cytoplasm. The enzyme catalyses (sulfur carrier)-H + L-cysteine = (sulfur carrier)-SH + L-alanine. Its pathway is cofactor biosynthesis; iron-sulfur cluster biosynthesis. Functionally, master enzyme that delivers sulfur to a number of partners involved in Fe-S cluster assembly, tRNA modification or cofactor biosynthesis. Catalyzes the removal of elemental sulfur atoms from cysteine to produce alanine. Functions as a sulfur delivery protein for Fe-S cluster synthesis onto IscU, an Fe-S scaffold assembly protein, as well as other S acceptor proteins. This Histophilus somni (strain 129Pt) (Haemophilus somnus) protein is Cysteine desulfurase IscS.